Consider the following 305-residue polypeptide: Serine/threonine-protein phosphatase 4 catalytic subunit (305 aa).

Residues aspartate 52, histidine 54, aspartate 80, and asparagine 112 each contribute to the Mn(2+) site. The Proton donor role is filled by histidine 113. Positions 162 and 236 each coordinate Mn(2+).

Belongs to the PPP phosphatase family. PP-4 (PP-X) subfamily. In terms of assembly, serine/threonine-protein phosphatase 4 (PP4) occurs in different assemblies of the catalytic and one or more regulatory subunits. Probably part of a PP4 complex containing ppp4c and ppp4r2. Interacts with smkA. The cofactor is Mn(2+).

It localises to the cytoplasm. The protein localises to the nucleus. It carries out the reaction O-phospho-L-seryl-[protein] + H2O = L-seryl-[protein] + phosphate. The enzyme catalyses O-phospho-L-threonyl-[protein] + H2O = L-threonyl-[protein] + phosphate. Required for development, chemotaxis and the expression of numerous genes. This chain is Serine/threonine-protein phosphatase 4 catalytic subunit (ppp4c), found in Dictyostelium discoideum (Social amoeba).